Reading from the N-terminus, the 287-residue chain is uncharacterized protein (287 aa).

The tract at residues Met1–Lys44 is disordered. A Phosphoserine modification is found at Ser37. The next 5 helical transmembrane spans lie at Phe55–Thr75, Thr124–Val144, Phe147–Leu167, Pro218–Ala238, and Asp260–Leu280.

The protein localises to the membrane. This is an uncharacterized protein from Arabidopsis thaliana (Mouse-ear cress).